The sequence spans 216 residues: DNA gyrase subunit B (216 aa).

The Toprim domain occupies 140-216 (SELYLVEGDS…PDKLRYHKII (77 aa)).

The protein belongs to the type II topoisomerase GyrB family. As to quaternary structure, heterotetramer, composed of two GyrA and two GyrB chains. In the heterotetramer, GyrA contains the active site tyrosine that forms a transient covalent intermediate with DNA, while GyrB binds cofactors and catalyzes ATP hydrolysis.

Its subcellular location is the cytoplasm. It catalyses the reaction ATP-dependent breakage, passage and rejoining of double-stranded DNA.. Its function is as follows. A type II topoisomerase that negatively supercoils closed circular double-stranded (ds) DNA in an ATP-dependent manner to modulate DNA topology and maintain chromosomes in an underwound state. Negative supercoiling favors strand separation, and DNA replication, transcription, recombination and repair, all of which involve strand separation. Also able to catalyze the interconversion of other topological isomers of dsDNA rings, including catenanes and knotted rings. Type II topoisomerases break and join 2 DNA strands simultaneously in an ATP-dependent manner. The polypeptide is DNA gyrase subunit B (gyrB) (Acinetobacter sp. (strain ATCC 33308 / BD413 ErpE27)).